The sequence spans 555 residues: Zinc transporter ZIP5 (555 aa).

The Extracellular portion of the chain corresponds to 1–242 (MGGQTVWMTL…HSQASKTSEG (242 aa)). Residues 108–148 (KHPSQSISHSHSHEDHHPSQGTTNSPPLRESLDAKSALSGS) are disordered. A helical transmembrane segment spans residues 243 to 263 (FLIALGWASLALLVISLPSLV). The Cytoplasmic portion of the chain corresponds to 264 to 314 (ALGMAPLLQPSVLQVFLCPMAGMAVGTLCGDALLHLMPHAIFSQHTDHQNA). Residues 315-335 (VFKGLSVLGGLYLLFIFESLL) form a helical membrane-spanning segment. The Extracellular portion of the chain corresponds to 336-408 (GLKQHFKNLK…DGIHNLTDGL (73 aa)). The span at 363 to 374 (TSSANQNESSGH) shows a compositional bias: polar residues. A disordered region spans residues 363 to 383 (TSSANQNESSGHGHSHGQAEP). A helical membrane pass occupies residues 409-429 (AIGVAFSQSLTGGFSTAIAVF). Residues 430–452 (CHELPHELGDLAVLLSAGWPVRR) lie on the Cytoplasmic side of the membrane. A helical membrane pass occupies residues 453–473 (LLVFSGLSALLGFVGVLAGSA). The Extracellular segment spans residues 474–482 (LGNHWASHS). The chain crosses the membrane as a helical span at residues 483 to 503 (PWILTLTAGVFLYVALADMMP). At 504-518 (EMLHGACGSVSPLKR) the chain is on the cytoplasmic side. Residues 519 to 539 (FLLQALGLLTGGAIMLCIALF) traverse the membrane as a helical segment. The Extracellular segment spans residues 540 to 555 (EDHIAVSLGENSLGEN).

The protein belongs to the ZIP transporter (TC 2.A.5) family.

The protein localises to the basolateral cell membrane. It carries out the reaction Zn(2+)(in) = Zn(2+)(out). Functionally, uniporter that transports zinc(2+) into polarized cells of enterocytes, pancreatic acinar and endoderm cells across the basolateral membrane and participates, notably, in zinc excretion from the intestine by the uptake of zinc from the blood into the intestine. The transport mechanism is temperature- and concentration-dependent and saturable. Mediates zinc homeostasis that is essential for venous angiogenesis. This Danio rerio (Zebrafish) protein is Zinc transporter ZIP5 (slc39a5).